Reading from the N-terminus, the 580-residue chain is Phosphatase and actin regulator 1 (580 aa).

Residues Ser-67 and Ser-78 each carry the phosphoserine modification. Residue Thr-104 is modified to Phosphothreonine. The Nuclear localization signal motif lies at 108 to 129 (RRRSKFANLGRIFKPWKWRKKK). An RPEL 1 repeat occupies 138–163 (AALERKISMRQSREELIKRGVLKEIY). Disordered regions lie at residues 330 to 350 (SEQR…SSDG) and 374 to 408 (DNKE…DDAS). The span at 337–348 (STSYHSSGLHSS) shows a compositional bias: low complexity. Residues 374–383 (DNKENVPHEP) are compositionally biased toward basic and acidic residues. Positions 395–407 (EEEEEEEDEDDDA) are enriched in acidic residues. RPEL repeat units lie at residues 422–447 (DSLA…PRQT), 460–485 (TKLT…KPRN), and 498–523 (RRLT…IRFS). Positions 463–494 (TRRLSQRPTAEELEQRNILKPRNEQEEQEEKR) are disordered. Ser-467 carries the post-translational modification Phosphoserine. Positions 471–494 (TAEELEQRNILKPRNEQEEQEEKR) are enriched in basic and acidic residues. Residue Ser-505 is modified to Phosphoserine.

The protein belongs to the phosphatase and actin regulator family. Interacts (via RPEL repeats) with ACTA1 and PPP1CA; ACTA1 and PPP1CA compete for the same binding site.

The protein localises to the cytoplasm. It localises to the synapse. Its subcellular location is the nucleus. Its function is as follows. Binds actin monomers (G actin) and plays a role in multiple processes including the regulation of actin cytoskeleton dynamics, actin stress fibers formation, cell motility and survival, formation of tubules by endothelial cells, and regulation of PPP1CA activity. Involved in the regulation of cortical neuron migration and dendrite arborization. In Mus musculus (Mouse), this protein is Phosphatase and actin regulator 1 (Phactr1).